The following is a 296-amino-acid chain: F-box only protein 2 (296 aa).

Residues 1–41 (MDGDGDPESVGQPEEASPEEQPEEASAEEERPEDQQEEEAA) are disordered. Acidic residues predominate over residues 16–40 (ASPEEQPEEASAEEERPEDQQEEEA). An F-box domain is found at 44–91 (AAYLDELPEPLLLRVLAALPAAELVQACRLVCLRWKELVDGAPLWLLK). The FBA domain occupies 113-296 (FYFLSKRRRN…VTNSSVWVEP (184 aa)). A carbohydrate-binding positions include 210–212 (RSD) and 278–279 (YW).

Component of the SCF(FBXO2) complex consisting of CUL1, RBX1, SKP1 and FBXO2. Predominantly detected as heterodimer with SKP1; the heterodimer with SKP1 is not part of the SCF(FBXO2) complex.

It is found in the cytoplasm. It localises to the microsome membrane. The protein operates within protein modification; protein ubiquitination. Functionally, substrate recognition component of a SCF (SKP1-CUL1-F-box protein) E3 ubiquitin-protein ligase complex that mediates the ubiquitination and subsequent proteasomal degradation of target proteins. Involved in the endoplasmic reticulum-associated degradation pathway (ERAD) for misfolded lumenal proteins by recognizing and binding sugar chains on unfolded glycoproteins that are retrotranslocated into the cytosol and promoting their ubiquitination and subsequent degradation. Prevents formation of cytosolic aggregates of unfolded glycoproteins that have been retrotranslocated into the cytosol. Able to recognize and bind denatured glycoproteins, preferentially those of the high-mannose type. This is F-box only protein 2 (FBXO2) from Homo sapiens (Human).